The following is a 127-amino-acid chain: Small ribosomal subunit protein uS11 (127 aa).

Belongs to the universal ribosomal protein uS11 family. In terms of assembly, part of the 30S ribosomal subunit. Interacts with proteins S7 and S18. Binds to IF-3.

Its function is as follows. Located on the platform of the 30S subunit, it bridges several disparate RNA helices of the 16S rRNA. Forms part of the Shine-Dalgarno cleft in the 70S ribosome. The chain is Small ribosomal subunit protein uS11 from Chlorobaculum tepidum (strain ATCC 49652 / DSM 12025 / NBRC 103806 / TLS) (Chlorobium tepidum).